Reading from the N-terminus, the 64-residue chain is MSKLGVLLTICLLLFPLTALPLDGDQPADQAAERMQAEQHPLFDQKRRCCKFPCPDSCRYLCCG.

The first 19 residues, 1–19, serve as a signal peptide directing secretion; the sequence is MSKLGVLLTICLLLFPLTA. Positions 20-47 are excised as a propeptide; sequence LPLDGDQPADQAAERMQAEQHPLFDQKR. Intrachain disulfides connect cysteine 49–cysteine 58, cysteine 50–cysteine 62, and cysteine 54–cysteine 63. Cysteine 63 carries the cysteine amide modification.

The protein belongs to the conotoxin M superfamily. Contains 3 disulfide bonds. Post-translationally, two peptides are produced from this precursor. Conotoxin Tx3.5-b is amidated at Cys-63, conotoxin Tx3.5-a has an unmodified C-terminus. In terms of tissue distribution, expressed by the venom duct. Is present in all duct parts with a highest content in part 2 (proximal of the venom bulb) and then decreases in concentration toward the end of the duct.

The protein localises to the secreted. The polypeptide is Conotoxin Tx3.5-a (Conus textile (Cloth-of-gold cone)).